The following is a 164-amino-acid chain: Anterior gradient protein 2-B (164 aa).

Positions 1–20 are cleaved as a signal peptide; it reads MESVLKSLFVLLVATSFTLA. 2 short sequence motifs (homodimer stabilization; interchain) span residues 34-43 and 49-56; these read SRGWGDNLEW and EGLYKAKA.

The protein belongs to the AGR family. In terms of assembly, monomer and homodimer.

The protein resides in the secreted. The protein localises to the endoplasmic reticulum. This Xenopus laevis (African clawed frog) protein is Anterior gradient protein 2-B (agr2-b).